The sequence spans 379 residues: Queuine tRNA-ribosyltransferase (379 aa).

Asp-94 acts as the Proton acceptor in catalysis. Substrate is bound by residues 94-98 (DSGGF), Asp-148, Gln-191, and Gly-218. Residues 249–255 (GVGSPDA) form an RNA binding region. The active-site Nucleophile is Asp-268. Residues 273-277 (TRIAR) are RNA binding; important for wobble base 34 recognition. Residues Cys-306, Cys-308, Cys-311, and His-337 each contribute to the Zn(2+) site.

It belongs to the queuine tRNA-ribosyltransferase family. As to quaternary structure, homodimer. Within each dimer, one monomer is responsible for RNA recognition and catalysis, while the other monomer binds to the replacement base PreQ1. It depends on Zn(2+) as a cofactor.

It carries out the reaction 7-aminomethyl-7-carbaguanine + guanosine(34) in tRNA = 7-aminomethyl-7-carbaguanosine(34) in tRNA + guanine. It participates in tRNA modification; tRNA-queuosine biosynthesis. Its function is as follows. Catalyzes the base-exchange of a guanine (G) residue with the queuine precursor 7-aminomethyl-7-deazaguanine (PreQ1) at position 34 (anticodon wobble position) in tRNAs with GU(N) anticodons (tRNA-Asp, -Asn, -His and -Tyr). Catalysis occurs through a double-displacement mechanism. The nucleophile active site attacks the C1' of nucleotide 34 to detach the guanine base from the RNA, forming a covalent enzyme-RNA intermediate. The proton acceptor active site deprotonates the incoming PreQ1, allowing a nucleophilic attack on the C1' of the ribose to form the product. After dissociation, two additional enzymatic reactions on the tRNA convert PreQ1 to queuine (Q), resulting in the hypermodified nucleoside queuosine (7-(((4,5-cis-dihydroxy-2-cyclopenten-1-yl)amino)methyl)-7-deazaguanosine). The sequence is that of Queuine tRNA-ribosyltransferase from Macrococcus caseolyticus (strain JCSC5402) (Macrococcoides caseolyticum).